The primary structure comprises 391 residues: MDMASESVGGKILFATDDFFAPAENLIKSDSPCFKEHEYTEFGKWMDGWETRRKRIPGHDWCVLRLGIQGVIRGFDVDVSYFTGDYAPRVSIQAANLEEDKLPEIPERGTRTGAAATPEEFEAIAELKSDDWSYLVPMTELKPGNPASGHNYFLVNSQQRWTHIRLNIFPDGGIARLRVFGTGQKDWTATDPKEPADLVAIAFGGVCVGFSNAKFGHPNNIIGVGGAKSMADGWETARRLDRPPILENDENGILLVPGCEWAVFRLAHPGVITRIEIDTKYFEGNAPDSCKVDGCILTTQEEEAVIRQKWILPAHKWKPLLPVTKLSPNQSHLFDSLTLELQDVITHARLTIVPDGGVSRLRLRGFPSSICLLRPREKPMLKFSVSFKANP.

This sequence belongs to the allantoicase family.

Its function is as follows. The function of this enzyme is unclear as allantoicase activity is not known to exist in mammals. The sequence is that of Probable inactive allantoicase from Homo sapiens (Human).